Consider the following 119-residue polypeptide: Large ribosomal subunit protein bL19 (119 aa).

The protein belongs to the bacterial ribosomal protein bL19 family.

Its function is as follows. This protein is located at the 30S-50S ribosomal subunit interface and may play a role in the structure and function of the aminoacyl-tRNA binding site. The protein is Large ribosomal subunit protein bL19 of Saccharopolyspora erythraea (strain ATCC 11635 / DSM 40517 / JCM 4748 / NBRC 13426 / NCIMB 8594 / NRRL 2338).